Here is a 935-residue protein sequence, read N- to C-terminus: Protocadherin gamma-A11 (935 aa).

An N-terminal signal peptide occupies residues 1 to 29 (MANRLQRGDRSRLLLLLCIFLGTLRGFRA). 6 Cadherin domains span residues 30 to 134 (RQIR…APSF), 135 to 243 (QEDE…IPMF), 244 to 348 (TQSV…APEI), 349 to 453 (TITS…PPVF), 454 to 563 (PHSS…APEI), and 571 to 677 (DGST…ADLG). Residues 30-693 (RQIRYSVPEE…NSETSDLSLY (664 aa)) are Extracellular-facing. An N-linked (GlcNAc...) asparagine glycan is attached at N48. 4 N-linked (GlcNAc...) asparagine glycosylation sites follow: N255, N266, N420, and N546. Residues 694 to 714 (LVVAVAAVSCIFLVFVIVLLA) form a helical membrane-spanning segment. The Cytoplasmic segment spans residues 715 to 935 (LRLWRWHKSR…KKKSGKKEKK (221 aa)). Disordered regions lie at residues 805–844 (CDPT…WPNN) and 905–935 (ATLT…KEKK). Positions 807-844 (PTSNQQAPPNTDWRFSQAQRPGTSGSQNGDDTGTWPNN) are enriched in polar residues. A compositionally biased stretch (basic residues) spans 925–935 (NKKKSGKKEKK).

The protein localises to the cell membrane. Its function is as follows. Potential calcium-dependent cell-adhesion protein. May be involved in the establishment and maintenance of specific neuronal connections in the brain. In Homo sapiens (Human), this protein is Protocadherin gamma-A11 (PCDHGA11).